Here is a 246-residue protein sequence, read N- to C-terminus: Proteasome subunit alpha (246 aa).

Belongs to the peptidase T1A family. As to quaternary structure, the 20S proteasome core is composed of 14 alpha and 14 beta subunits that assemble into four stacked heptameric rings, resulting in a barrel-shaped structure. The two inner rings, each composed of seven catalytic beta subunits, are sandwiched by two outer rings, each composed of seven alpha subunits. The catalytic chamber with the active sites is on the inside of the barrel. Has a gated structure, the ends of the cylinder being occluded by the N-termini of the alpha-subunits. Is capped at one or both ends by the proteasome regulatory ATPase, PAN.

The protein localises to the cytoplasm. Its activity is regulated as follows. The formation of the proteasomal ATPase PAN-20S proteasome complex, via the docking of the C-termini of PAN into the intersubunit pockets in the alpha-rings, triggers opening of the gate for substrate entry. Interconversion between the open-gate and close-gate conformations leads to a dynamic regulation of the 20S proteasome proteolysis activity. Component of the proteasome core, a large protease complex with broad specificity involved in protein degradation. This is Proteasome subunit alpha from Methanopyrus kandleri (strain AV19 / DSM 6324 / JCM 9639 / NBRC 100938).